Reading from the N-terminus, the 224-residue chain is Putative adhesin RMA_1308 (224 aa).

Positions 1–22 are cleaved as a signal peptide; it reads MQKLLLIAATSATILSSSLSFA.

This chain is Putative adhesin RMA_1308, found in Rickettsia massiliae (strain Mtu5).